We begin with the raw amino-acid sequence, 112 residues long: UPF0342 protein SP_1372 (112 aa).

The protein belongs to the UPF0342 family.

The protein is UPF0342 protein SP_1372 of Streptococcus pneumoniae serotype 4 (strain ATCC BAA-334 / TIGR4).